Here is a 332-residue protein sequence, read N- to C-terminus: F-box/SPRY domain-containing protein 1 (332 aa).

Residues 1–82 (MAENDGETIV…RSPRRPEVSA (82 aa)) are disordered. Composition is skewed to polar residues over residues 15–28 (CNLTASTPMKSSGL) and 49–64 (NPSSGTPDESPKQLTP). In terms of domain architecture, F-box spans 79-127 (EVSASRLPLKVLNQIFQYLPLKDLRSAMLTCHSWNNALSMEDSDIWQYL). The B30.2/SPRY domain occupies 138-330 (SDPFLLAELG…VTMVYVGSPQ (193 aa)).

The protein belongs to the FBXO45/Fsn family. Component of an SCF (SKP1-CUL1-F-box protein) E3 ubiquitin ligase complex composed of cul-1, fsn-1, rpm-1 and skr-1. Interacts (via SPRY domain) with scd-2 (via cytoplasmic domain). Interacts (via SPRY domain) with convertase egl-3 (via C-terminus). Expressed in GABAergic neuromuscular junctions (NMJs).

The protein localises to the synapse. The protein operates within protein modification; protein ubiquitination. Its function is as follows. Component of a SCF (SKP1-CUL1-F-box protein) E3 ubiquitin ligase complex which is required for the restriction and/or maturation of synapses in GABAergic neuromuscular junction (NMJ) presynaptic neurons. Promotes NRJ synapse development and synaptic transmission by negatively regulating the daf-2/InsR pathway in muscles. By targeting convertase egl-3 for degradation, negatively modulates insulin-like protein ins-4 and ins-6 processing. May stabilize synapse formation by promoting the down-regulation of scd-2. Regulates axon termination in PLM and ALM neurons. This is F-box/SPRY domain-containing protein 1 (fsn-1) from Caenorhabditis elegans.